The primary structure comprises 357 residues: SPbeta prophage-derived pesticidal crystal protein-like YokG (357 aa).

Belongs to the cry6A endotoxin family.

The sequence is that of SPbeta prophage-derived pesticidal crystal protein-like YokG (yokG) from Bacillus subtilis (strain 168).